Reading from the N-terminus, the 285-residue chain is Urease accessory protein UreD (285 aa).

The protein belongs to the UreD family. In terms of assembly, ureD, UreF and UreG form a complex that acts as a GTP-hydrolysis-dependent molecular chaperone, activating the urease apoprotein by helping to assemble the nickel containing metallocenter of UreC. The UreE protein probably delivers the nickel.

Its subcellular location is the cytoplasm. Its function is as follows. Required for maturation of urease via the functional incorporation of the urease nickel metallocenter. The sequence is that of Urease accessory protein UreD from Picosynechococcus sp. (strain ATCC 27264 / PCC 7002 / PR-6) (Agmenellum quadruplicatum).